A 540-amino-acid polypeptide reads, in one-letter code: DM7 family protein GD24576 (540 aa).

The segment at 416-443 is disordered; it reads ATDTRGRDEIRTSCDQSQEKDEGSAEAD. Basic and acidic residues predominate over residues 417–443; that stretch reads TDTRGRDEIRTSCDQSQEKDEGSAEAD.

The protein belongs to the DM7 family.

In Drosophila simulans (Fruit fly), this protein is DM7 family protein GD24576.